We begin with the raw amino-acid sequence, 474 residues long: Protein FAM161A (474 aa).

Disordered regions lie at residues 78 to 126 (SSSS…PGEI), 185 to 210 (QKRR…DDAE), and 308 to 364 (REEL…DQGL). The stretch at 188–250 (REKASDAQET…KKTRERSKAA (63 aa)) forms a coiled coil. The interval 274 to 454 (KLRELCRAKK…PTASSRGREQ (181 aa)) is required for interaction with CFAP418. The segment covering 325 to 335 (LQSSPWPSHST) has biased composition (polar residues). Residues Lys397 and Lys413 each participate in a glycyl lysine isopeptide (Lys-Gly) (interchain with G-Cter in SUMO2) cross-link. Residues 412 to 474 (LKETRRPNPS…KELARIGGAR (63 aa)) form a disordered region. Positions 422 to 431 (PRHKSPRRSA) are enriched in basic residues. The span at 450 to 468 (RGREQAIRRSEKARMKELA) shows a compositional bias: basic and acidic residues.

The protein belongs to the FAM161 family. As to quaternary structure, interacts (via central region) with CFAP418 (via N-terminus); the interaction is direct. Interacts (via C-terminus) with microtubules. Interacts with LCA5. Interacts with CEP290. Interacts with SDCCAG8. Interacts with FAM161B. Interacts with POC1B. Interacts with CEP78. Forms a microtubule-associated complex with POC5, CETN2 and POC1B. Interacts with CCDC15. Expressed in the retina and kidney.

It is found in the cytoplasm. It localises to the cytoskeleton. Its subcellular location is the cilium basal body. The protein localises to the cell projection. The protein resides in the cilium. It is found in the microtubule organizing center. It localises to the centrosome. Its subcellular location is the centriole. In terms of biological role, involved in ciliogenesis. This is Protein FAM161A from Rattus norvegicus (Rat).